The following is a 1046-amino-acid chain: Translation initiation factor IF-2 (1046 aa).

Residues 49–450 form a disordered region; it reads ALQQGNGGKA…GVMLPRGNGQ (402 aa). Low complexity-rich tracts occupy residues 57–80 and 89–106; these read KAAP…ARPA and PAAA…AAPA. Residues 107 to 128 are compositionally biased toward pro residues; that stretch reads APGPRPGPKPAPRPAPAAPAPA. A compositionally biased stretch (low complexity) spans 129–169; it reads APEFTAPPSAPAAPAAAASGPRPGARPGAPKPGGARPATPG. Basic and acidic residues predominate over residues 177-194; the sequence is RGERTDRGDRGDRGDRQG. A compositionally biased stretch (low complexity) spans 195-214; the sequence is AARPGGQAPRPGARPAGPRP. Gly residues-rich tracts occupy residues 239–248 and 266–280; these read PRPGGAGAPG and GGPG…GPGG. Residues 302–318 are compositionally biased toward low complexity; that stretch reads GNRPNPGMMPQRPAAGP. The segment covering 319-414 has biased composition (gly residues); sequence RPGGGGPGGR…GTQGAFGRPG (96 aa). The span at 418-427 shows a compositional bias: basic residues; sequence RRGRKSKRQR. The tr-type G domain maps to 539–711; that stretch reads ARPPVVTVMG…VVLTADASLD (173 aa). The G1 stretch occupies residues 548 to 555; the sequence is GHVDHGKT. 548-555 is a GTP binding site; sequence GHVDHGKT. A G2 region spans residues 573–577; sequence GITQH. The G3 stretch occupies residues 598–601; that stretch reads DTPG. Residues 598–602 and 652–655 contribute to the GTP site; these read DTPGH and NKID. Residues 652–655 form a G4 region; sequence NKID. The tract at residues 688 to 690 is G5; it reads SAK.

This sequence belongs to the TRAFAC class translation factor GTPase superfamily. Classic translation factor GTPase family. IF-2 subfamily.

The protein localises to the cytoplasm. Functionally, one of the essential components for the initiation of protein synthesis. Protects formylmethionyl-tRNA from spontaneous hydrolysis and promotes its binding to the 30S ribosomal subunits. Also involved in the hydrolysis of GTP during the formation of the 70S ribosomal complex. The chain is Translation initiation factor IF-2 from Streptomyces avermitilis (strain ATCC 31267 / DSM 46492 / JCM 5070 / NBRC 14893 / NCIMB 12804 / NRRL 8165 / MA-4680).